Here is a 161-residue protein sequence, read N- to C-terminus: 6,7-dimethyl-8-ribityllumazine synthase (161 aa).

Residues Trp-25, 57–59 (AFE), and 80–82 (VVI) each bind 5-amino-6-(D-ribitylamino)uracil. Residue 85 to 86 (GT) participates in (2S)-2-hydroxy-3-oxobutyl phosphate binding. His-88 acts as the Proton donor in catalysis. 5-amino-6-(D-ribitylamino)uracil is bound at residue Phe-113. Residue Arg-127 participates in (2S)-2-hydroxy-3-oxobutyl phosphate binding.

It belongs to the DMRL synthase family.

The catalysed reaction is (2S)-2-hydroxy-3-oxobutyl phosphate + 5-amino-6-(D-ribitylamino)uracil = 6,7-dimethyl-8-(1-D-ribityl)lumazine + phosphate + 2 H2O + H(+). It functions in the pathway cofactor biosynthesis; riboflavin biosynthesis; riboflavin from 2-hydroxy-3-oxobutyl phosphate and 5-amino-6-(D-ribitylamino)uracil: step 1/2. Its function is as follows. Catalyzes the formation of 6,7-dimethyl-8-ribityllumazine by condensation of 5-amino-6-(D-ribitylamino)uracil with 3,4-dihydroxy-2-butanone 4-phosphate. This is the penultimate step in the biosynthesis of riboflavin. The chain is 6,7-dimethyl-8-ribityllumazine synthase from Kineococcus radiotolerans (strain ATCC BAA-149 / DSM 14245 / SRS30216).